A 222-amino-acid polypeptide reads, in one-letter code: DnaJ homolog subfamily B member 9 (222 aa).

Residues 1 to 23 form the signal peptide; sequence MATPQSVFVFAICILMITELILA. The J domain maps to 26–90; it reads SYYDILGVPK…NSRKEYDTIG (65 aa). The tract at residues 91 to 222 is divergent targeting domain; it reads HSAFTNGKGQ…VTTYTDCSGQ (132 aa). At S133 the chain carries Phosphoserine.

Interacts with HSPA5/BiP; interaction is direct. Interacts with ERN1/IRE1 (via the luminal region). Interacts with DERL1. Not N-glycosylated.

The protein localises to the endoplasmic reticulum lumen. In terms of biological role, co-chaperone for Hsp70 protein HSPA5/BiP that acts as a key repressor of the ERN1/IRE1-mediated unfolded protein response (UPR). J domain-containing co-chaperones stimulate the ATPase activity of Hsp70 proteins and are required for efficient substrate recognition by Hsp70 proteins. In the unstressed endoplasmic reticulum, interacts with the luminal region of ERN1/IRE1 and selectively recruits HSPA5/BiP: HSPA5/BiP disrupts the dimerization of the active ERN1/IRE1 luminal region, thereby inactivating ERN1/IRE1. Also involved in endoplasmic reticulum-associated degradation (ERAD) of misfolded proteins. Required for survival of B-cell progenitors and normal antibody production. The chain is DnaJ homolog subfamily B member 9 from Mus musculus (Mouse).